The sequence spans 181 residues: ATP-dependent protease subunit HslV (181 aa).

Residue T7 is part of the active site. The Na(+) site is built by A165, C168, and T171.

The protein belongs to the peptidase T1B family. HslV subfamily. As to quaternary structure, a double ring-shaped homohexamer of HslV is capped on each side by a ring-shaped HslU homohexamer. The assembly of the HslU/HslV complex is dependent on binding of ATP.

The protein localises to the cytoplasm. It carries out the reaction ATP-dependent cleavage of peptide bonds with broad specificity.. Its activity is regulated as follows. Allosterically activated by HslU binding. Its function is as follows. Protease subunit of a proteasome-like degradation complex believed to be a general protein degrading machinery. The polypeptide is ATP-dependent protease subunit HslV (Lysinibacillus sphaericus (strain C3-41)).